A 476-amino-acid polypeptide reads, in one-letter code: Protein transport protein Sec61 subunit alpha isoform A (476 aa).

Topologically, residues G2–L33 are cytoplasmic. The helical transmembrane segment at W34–I53 threads the bilayer. The Lumenal segment spans residues M54–L76. A helical transmembrane segment spans residues M77–G96. Over A97–K117 the chain is Cytoplasmic. The helical transmembrane segment at L118–G138 threads the bilayer. The Lumenal segment spans residues D139 to G144. A helical membrane pass occupies residues A145–L165. The Cytoplasmic portion of the chain corresponds to D166 to G172. A helical transmembrane segment spans residues Y173 to W193. Topologically, residues K194–P240 are lumenal. Residues N241–F261 traverse the membrane as a helical segment. At R262–N288 the chain is on the cytoplasmic side. The helical transmembrane segment at I289–S309 threads the bilayer. The Lumenal portion of the chain corresponds to T310 to V354. The helical transmembrane segment at L355 to F375 threads the bilayer. Topologically, residues S376–A420 are cytoplasmic. The helical transmembrane segment at A421–I441 threads the bilayer. The Lumenal segment spans residues G442–T445. Residues G446 to V462 traverse the membrane as a helical segment. Residues K463 to F476 lie on the Cytoplasmic side of the membrane.

The protein belongs to the SecY/SEC61-alpha family. As to quaternary structure, the SEC61 channel-forming translocon complex consists of channel-forming core components SEC61A1, SEC61B and SEC61G and different auxiliary components such as SEC62 and SEC63. The SEC61 channel associates with the multi-pass translocon (MPT) complex.

Its subcellular location is the endoplasmic reticulum membrane. Its function is as follows. Component of SEC61 channel-forming translocon complex that mediates transport of signal peptide-containing precursor polypeptides across the endoplasmic reticulum (ER). Forms a ribosome receptor and a gated pore in the ER membrane, both functions required for cotranslational translocation of nascent polypeptides. May cooperate with auxiliary protein SEC62, SEC63 and HSPA5/BiP to enable post-translational transport of small presecretory proteins. The SEC61 channel is also involved in ER membrane insertion of transmembrane proteins: it mediates membrane insertion of the first few transmembrane segments of proteins, while insertion of subsequent transmembrane regions of multi-pass membrane proteins is mediated by the multi-pass translocon (MPT) complex. The polypeptide is Protein transport protein Sec61 subunit alpha isoform A (sec61aa) (Oncorhynchus mykiss (Rainbow trout)).